The primary structure comprises 185 residues: MQSTQGIERSGEHGRVIVAAVRIRGLVDVSPEVNHTLNLLRLRRRFTCSVYVLSDSIKGMLKSVESWATWGELSRDTLIQLLRRRGRIVGDLPLTDEYLKKYGWGSVEELVDAYLKGEVKSLWCRRGEGPRMINGKASCIPGLKPFFRLHPPKGGFKGSIKKPYGAGGELGYRGLDINDLILRMI.

It belongs to the universal ribosomal protein uL30 family. In terms of assembly, part of the 50S ribosomal subunit.

The sequence is that of Large ribosomal subunit protein uL30 from Caldivirga maquilingensis (strain ATCC 700844 / DSM 13496 / JCM 10307 / IC-167).